The following is a 256-amino-acid chain: Thiazole synthase (256 aa).

Lysine 95 serves as the catalytic Schiff-base intermediate with DXP. Residues glycine 156, 182–183 (AG), and 204–205 (NT) contribute to the 1-deoxy-D-xylulose 5-phosphate site.

Belongs to the ThiG family. In terms of assembly, homotetramer. Forms heterodimers with either ThiH or ThiS.

Its subcellular location is the cytoplasm. The catalysed reaction is [ThiS sulfur-carrier protein]-C-terminal-Gly-aminoethanethioate + 2-iminoacetate + 1-deoxy-D-xylulose 5-phosphate = [ThiS sulfur-carrier protein]-C-terminal Gly-Gly + 2-[(2R,5Z)-2-carboxy-4-methylthiazol-5(2H)-ylidene]ethyl phosphate + 2 H2O + H(+). It functions in the pathway cofactor biosynthesis; thiamine diphosphate biosynthesis. Functionally, catalyzes the rearrangement of 1-deoxy-D-xylulose 5-phosphate (DXP) to produce the thiazole phosphate moiety of thiamine. Sulfur is provided by the thiocarboxylate moiety of the carrier protein ThiS. In vitro, sulfur can be provided by H(2)S. The sequence is that of Thiazole synthase from Shigella dysenteriae serotype 1 (strain Sd197).